The primary structure comprises 159 residues: F1845 fimbrial protein (159 aa).

A signal peptide spans 1–21; that stretch reads MKKLAIMAAASMIFTVGSAQA.

This sequence belongs to the Dr-adhesin family.

It localises to the fimbrium. Its function is as follows. Hemagglutinins of uropathogenic E.coli mediate adherence to the upper urinary tract. These adhesins bind to the Dr blood group antigen and also agglutinate human erythrocytes in the presence of D-mannose (mannose-resistant hemagglutination (MRHA)). C1845 is a strain responsible for diarrheal disease. This chain is F1845 fimbrial protein (daaE), found in Escherichia coli.